The primary structure comprises 453 residues: Allantoinase (453 aa).

The Zn(2+) site is built by histidine 59, histidine 61, lysine 146, histidine 186, histidine 242, and aspartate 315. Position 146 is an N6-carboxylysine (lysine 146).

The protein belongs to the metallo-dependent hydrolases superfamily. Allantoinase family. Homotetramer. Zn(2+) serves as cofactor. Post-translationally, carboxylation allows a single lysine to coordinate two zinc ions.

It carries out the reaction (S)-allantoin + H2O = allantoate + H(+). The protein operates within nitrogen metabolism; (S)-allantoin degradation; allantoate from (S)-allantoin: step 1/1. Its function is as follows. Catalyzes the conversion of allantoin (5-ureidohydantoin) to allantoic acid by hydrolytic cleavage of the five-member hydantoin ring. This chain is Allantoinase, found in Escherichia coli (strain K12 / MC4100 / BW2952).